A 79-amino-acid chain; its full sequence is Sulfur carrier protein TusA (79 aa).

The active-site Cysteine persulfide intermediate is the cysteine 17.

Belongs to the sulfur carrier protein TusA family.

Its subcellular location is the cytoplasm. Its function is as follows. Sulfur carrier protein which probably makes part of a sulfur-relay system. The chain is Sulfur carrier protein TusA from Pseudoalteromonas translucida (strain TAC 125).